Consider the following 179-residue polypeptide: ATP synthase subunit delta (179 aa).

This sequence belongs to the ATPase delta chain family. F-type ATPases have 2 components, F(1) - the catalytic core - and F(0) - the membrane proton channel. F(1) has five subunits: alpha(3), beta(3), gamma(1), delta(1), epsilon(1). F(0) has three main subunits: a(1), b(2) and c(10-14). The alpha and beta chains form an alternating ring which encloses part of the gamma chain. F(1) is attached to F(0) by a central stalk formed by the gamma and epsilon chains, while a peripheral stalk is formed by the delta and b chains.

It localises to the cell membrane. Its function is as follows. F(1)F(0) ATP synthase produces ATP from ADP in the presence of a proton or sodium gradient. F-type ATPases consist of two structural domains, F(1) containing the extramembraneous catalytic core and F(0) containing the membrane proton channel, linked together by a central stalk and a peripheral stalk. During catalysis, ATP synthesis in the catalytic domain of F(1) is coupled via a rotary mechanism of the central stalk subunits to proton translocation. Functionally, this protein is part of the stalk that links CF(0) to CF(1). It either transmits conformational changes from CF(0) to CF(1) or is implicated in proton conduction. This chain is ATP synthase subunit delta, found in Ureaplasma parvum serovar 3 (strain ATCC 27815 / 27 / NCTC 11736).